Here is a 345-residue protein sequence, read N- to C-terminus: Protein-glutamate methylesterase/protein-glutamine glutaminase 1 (345 aa).

Positions 8–123 (SVLVIDDSAH…FEAMEALRVE (116 aa)) constitute a Response regulatory domain. Asp59 carries the 4-aspartylphosphate modification. Residues 151 to 344 (AGEPPLVVAV…PALAALARRR (194 aa)) enclose the CheB-type methylesterase domain. Active-site residues include Ser163, His190, and Asp286.

Belongs to the CheB family. Phosphorylated by CheA. Phosphorylation of the N-terminal regulatory domain activates the methylesterase activity.

The protein resides in the cytoplasm. It catalyses the reaction [protein]-L-glutamate 5-O-methyl ester + H2O = L-glutamyl-[protein] + methanol + H(+). It carries out the reaction L-glutaminyl-[protein] + H2O = L-glutamyl-[protein] + NH4(+). In terms of biological role, involved in chemotaxis. Part of a chemotaxis signal transduction system that modulates chemotaxis in response to various stimuli. Catalyzes the demethylation of specific methylglutamate residues introduced into the chemoreceptors (methyl-accepting chemotaxis proteins or MCP) by CheR. Also mediates the irreversible deamidation of specific glutamine residues to glutamic acid. The protein is Protein-glutamate methylesterase/protein-glutamine glutaminase 1 of Myxococcus xanthus (strain DK1622).